We begin with the raw amino-acid sequence, 906 residues long: Aconitate hydratase A (906 aa).

Cysteine 443, cysteine 509, and cysteine 512 together coordinate [4Fe-4S] cluster.

It belongs to the aconitase/IPM isomerase family. In terms of assembly, monomer. It depends on [4Fe-4S] cluster as a cofactor.

The catalysed reaction is citrate = D-threo-isocitrate. The enzyme catalyses (2S,3R)-3-hydroxybutane-1,2,3-tricarboxylate = 2-methyl-cis-aconitate + H2O. Its pathway is carbohydrate metabolism; tricarboxylic acid cycle; isocitrate from oxaloacetate: step 2/2. It functions in the pathway organic acid metabolism; propanoate degradation. Its function is as follows. Involved in the catabolism of short chain fatty acids (SCFA) via the tricarboxylic acid (TCA)(acetyl degradation route) and probably via the 2-methylcitrate cycle I (propionate degradation route). Catalyzes the reversible isomerization of citrate to isocitrate via cis-aconitate. Could catalyze the hydration of 2-methyl-cis-aconitate to yield (2R,3S)-2-methylisocitrate. The apo form of AcnA functions as a RNA-binding regulatory protein. This is Aconitate hydratase A from Bradyrhizobium diazoefficiens (strain JCM 10833 / BCRC 13528 / IAM 13628 / NBRC 14792 / USDA 110).